A 218-amino-acid polypeptide reads, in one-letter code: Small ribosomal subunit protein uS3 (218 aa).

The 69-residue stretch at isoleucine 38–lysine 106 folds into the KH type-2 domain.

This sequence belongs to the universal ribosomal protein uS3 family. Part of the 30S ribosomal subunit. Forms a tight complex with proteins S10 and S14.

Its function is as follows. Binds the lower part of the 30S subunit head. Binds mRNA in the 70S ribosome, positioning it for translation. The chain is Small ribosomal subunit protein uS3 from Geobacillus sp. (strain WCH70).